Here is a 47-residue protein sequence, read N- to C-terminus: Potamin-1 (47 aa).

Disulfide bonds link C3–C40, C6–C24, and C7–C36.

Its function is as follows. Inhibitor of serine proteases chymotrypsin, papain and trypsin. Has strong antifungal activity against C.albicans and R.solani. Has antibacterial activity against the Gram-positive bacterium C.michiganense, but lacks antibacterial activity against the Gram-positive bacterium S.aureus. Lacks hemolytic activity against human erythrocytes. This chain is Potamin-1, found in Solanum tuberosum (Potato).